Reading from the N-terminus, the 313-residue chain is Heterogeneous nuclear ribonucleoproteins C1/C2 (313 aa).

Ala-2 carries the post-translational modification N-acetylalanine. Residues Lys-8, Lys-50, Lys-89, and Lys-94 each participate in a glycyl lysine isopeptide (Lys-Gly) (interchain with G-Cter in SUMO2) cross-link. Residues 16–87 (SRVFIGNLNT…QVLDINLAAE (72 aa)) enclose the RRM domain. A phosphoserine mark is found at Ser-113, Ser-115, and Ser-121. Disordered regions lie at residues 139-191 (YPAR…KLKG) and 219-313 (EKEQ…EDDS). The short motif at 155-161 (PSKRQRV) is the Nuclear localization signal element. Phosphoserine occurs at positions 162 and 166. Over residues 175 to 186 (SKSGQRGSSSKS) the composition is skewed to low complexity. Position 176 is an N6-acetyllysine; alternate (Lys-176). Lys-176 participates in a covalent cross-link: Glycyl lysine isopeptide (Lys-Gly) (interchain with G-Cter in SUMO2); alternate. A coiled-coil region spans residues 191-226 (GDDLQAIKKELTQIKQKVDSLLESLEKIEKEQSKQA). Lys-224 participates in a covalent cross-link: Glycyl lysine isopeptide (Lys-Gly) (interchain with G-Cter in SUMO2). 3 positions are modified to phosphoserine: Ser-229, Ser-231, and Ser-232. Lys-237 is covalently cross-linked (Glycyl lysine isopeptide (Lys-Gly) (interchain with G-Cter in SUMO2)). Lys-240 participates in a covalent cross-link: Glycyl lysine isopeptide (Lys-Gly) (interchain with G-Cter in SUMO2); alternate. A Glycyl lysine isopeptide (Lys-Gly) (interchain with G-Cter in SUMO1); alternate cross-link involves residue Lys-240. A phosphoserine mark is found at Ser-241, Ser-246, Ser-247, and Ser-249. A compositionally biased stretch (basic and acidic residues) spans 250-261 (VKKDETNVKMES). Glycyl lysine isopeptide (Lys-Gly) (interchain with G-Cter in SUMO2) cross-links involve residues Lys-251 and Lys-252. Residue Lys-258 forms a Glycyl lysine isopeptide (Lys-Gly) (interchain with G-Cter in SUMO2); alternate linkage. Residue Lys-258 forms a Glycyl lysine isopeptide (Lys-Gly) (interchain with G-Cter in SUMO); alternate linkage. Phosphoserine is present on residues Ser-261 and Ser-268. Residues 263–284 (AGADDSAEEGDLLDDDDNEDRG) show a composition bias toward acidic residues. Positions 285–294 (DDQLELKDDE) are enriched in basic and acidic residues. Positions 295–313 (KEPEEGEDDRDSANGEDDS) are enriched in acidic residues. Phosphoserine is present on residues Ser-306 and Ser-313.

Belongs to the RRM HNRPC family. RALY subfamily. Tetramer composed of 3 copies of isoform C1 and 1 copy of isoform C2. Assembly of 3 tetramers with bound pre-mRNA gives rise to a 19S complex that interacts with HNRNPA2B1 tetramers. Component of the 40S hnRNP particle. Identified in the spliceosome C complex. Interacts with IGF2BP1. Interacts with DHX9; this interaction is direct, enhanced probably by their concomitant binding to RNA and mediates the attachment to actin filaments. Interacts with PPIA/CYPA. Phosphorylated on Ser-268 and Ser-306 in resting cells. In terms of processing, sumoylated. Sumoylation reduces affinity for mRNA. Post-translationally, ubiquitinated and degraded after nucleo-cytoplasmic transport by YWHAE.

The protein resides in the nucleus. Functionally, binds pre-mRNA and nucleates the assembly of 40S hnRNP particles. Interacts with poly-U tracts in the 3'-UTR or 5'-UTR of mRNA and modulates the stability and the level of translation of bound mRNA molecules. Single HNRNPC tetramers bind 230-240 nucleotides. Trimers of HNRNPC tetramers bind 700 nucleotides. May play a role in the early steps of spliceosome assembly and pre-mRNA splicing. N6-methyladenosine (m6A) has been shown to alter the local structure in mRNAs and long non-coding RNAs (lncRNAs) via a mechanism named 'm(6)A-switch', facilitating binding of HNRNPC, leading to regulation of mRNA splicing. In Mus musculus (Mouse), this protein is Heterogeneous nuclear ribonucleoproteins C1/C2 (Hnrnpc).